Consider the following 137-residue polypeptide: Small ribosomal subunit protein uS9 (137 aa).

The disordered stretch occupies residues 105-137; that stretch reads LKAEGYLTRDPRAKERKKYGLHKARKAPQYSKR. A compositionally biased stretch (basic residues) spans 118-137; it reads KERKKYGLHKARKAPQYSKR.

This sequence belongs to the universal ribosomal protein uS9 family.

The sequence is that of Small ribosomal subunit protein uS9 (rpsI) from Synechocystis sp. (strain ATCC 27184 / PCC 6803 / Kazusa).